The following is a 139-amino-acid chain: MKKGAVLNSDISSVISRLGHTDTLVVCDAGLPVPSSTTRIDMALTQGVPSFMQVLDVVTREMQVEAAILATEIKEHNPQLHETLLSHIEQLQQHQGNTIEIRYTTHEHFKKLTADSQAVIRSGECSPYANVILCAGVTF.

Catalysis depends on H20, which acts as the Proton donor. Substrate-binding positions include D28, H106, and 128–130 (YAN).

It belongs to the RbsD / FucU family. RbsD subfamily. As to quaternary structure, homodecamer.

It is found in the cytoplasm. The enzyme catalyses beta-D-ribopyranose = beta-D-ribofuranose. It participates in carbohydrate metabolism; D-ribose degradation; D-ribose 5-phosphate from beta-D-ribopyranose: step 1/2. Catalyzes the interconversion of beta-pyran and beta-furan forms of D-ribose. This Citrobacter koseri (strain ATCC BAA-895 / CDC 4225-83 / SGSC4696) protein is D-ribose pyranase.